The chain runs to 594 residues: UvrABC system protein C (594 aa).

Positions 14-91 (DSPGCYLHKD…IQENMPKYNI (78 aa)) constitute a GIY-YIG domain. The UVR domain maps to 196–231 (DKIIDDLRSKMLEASNKQEFERAAEYRDLISGIATM).

Belongs to the UvrC family. Interacts with UvrB in an incision complex.

It is found in the cytoplasm. In terms of biological role, the UvrABC repair system catalyzes the recognition and processing of DNA lesions. UvrC both incises the 5' and 3' sides of the lesion. The N-terminal half is responsible for the 3' incision and the C-terminal half is responsible for the 5' incision. The protein is UvrABC system protein C of Streptococcus equi subsp. zooepidemicus (strain MGCS10565).